The primary structure comprises 511 residues: Zinc finger CCCH-type with G patch domain-containing protein (511 aa).

The segment at 157–180 (PCSYYLEGECRFDEARCRYSHGAL) adopts a C3H1-type zinc-finger fold. The interval 254–281 (DQEDELTSEDSSSVNDGSSDEEESDMDD) is disordered. A compositionally biased stretch (acidic residues) spans 271–281 (SSDEEESDMDD). Positions 311-357 (TRGIGSKLMEKMGYIHGTGLGSDGRGIVTPVSAQILPKGRSLDACME) constitute a G-patch domain. 2 disordered regions span residues 409-433 (GSDN…QHST) and 478-511 (MHNQ…MFEF). Residues 414 to 425 (QQAEPEAKKAKA) show a composition bias toward basic and acidic residues. The segment covering 478–493 (MHNQKQELATLQAQER) has biased composition (polar residues). Residues 494–511 (SLSKEQQTRKSKNKMFEF) show a composition bias toward basic and acidic residues.

It localises to the nucleus. In terms of biological role, transcription repressor. This chain is Zinc finger CCCH-type with G patch domain-containing protein, found in Drosophila ananassae (Fruit fly).